Reading from the N-terminus, the 135-residue chain is Large ribosomal subunit protein uL16c (135 aa).

The protein belongs to the universal ribosomal protein uL16 family. In terms of assembly, part of the 50S ribosomal subunit.

The protein localises to the plastid. The protein resides in the chloroplast. The sequence is that of Large ribosomal subunit protein uL16c from Cucumis sativus (Cucumber).